The following is a 228-amino-acid chain: uncharacterized protein (228 aa).

Positions 5–119 constitute a Response regulatory domain; that stretch reads HILIVEDEEK…ELLARIRAAL (115 aa). Asp-54 is subject to 4-aspartylphosphate. The ompR/PhoB-type DNA-binding region spans 130-228; the sequence is GTFLTYDDLR…IRGVGYAIKG (99 aa).

In terms of processing, phosphorylated by YkoH.

The protein resides in the cytoplasm. Functionally, probable member of the two-component regulatory system YkoH/YkoG. This is an uncharacterized protein from Bacillus subtilis (strain 168).